The chain runs to 95 residues: Integration host factor subunit beta (95 aa).

The protein belongs to the bacterial histone-like protein family. In terms of assembly, heterodimer of an alpha and a beta chain.

In terms of biological role, this protein is one of the two subunits of integration host factor, a specific DNA-binding protein that functions in genetic recombination as well as in transcriptional and translational control. This chain is Integration host factor subunit beta, found in Shewanella loihica (strain ATCC BAA-1088 / PV-4).